A 277-amino-acid chain; its full sequence is Shikimate dehydrogenase (NADP(+)) (277 aa).

Shikimate-binding positions include 17–19 (SRS) and Thr-64. Lys-68 acts as the Proton acceptor in catalysis. The shikimate site is built by Asn-88 and Asp-103. Residues 128–132 (GAGGS) and Leu-217 each bind NADP(+). Tyr-219 contributes to the shikimate binding site. Residue Gly-240 participates in NADP(+) binding.

It belongs to the shikimate dehydrogenase family. As to quaternary structure, homodimer.

The enzyme catalyses shikimate + NADP(+) = 3-dehydroshikimate + NADPH + H(+). Its pathway is metabolic intermediate biosynthesis; chorismate biosynthesis; chorismate from D-erythrose 4-phosphate and phosphoenolpyruvate: step 4/7. Involved in the biosynthesis of the chorismate, which leads to the biosynthesis of aromatic amino acids. Catalyzes the reversible NADPH linked reduction of 3-dehydroshikimate (DHSA) to yield shikimate (SA). The sequence is that of Shikimate dehydrogenase (NADP(+)) from Afipia carboxidovorans (strain ATCC 49405 / DSM 1227 / KCTC 32145 / OM5) (Oligotropha carboxidovorans).